The chain runs to 148 residues: Large-conductance mechanosensitive channel (148 aa).

The next 2 helical transmembrane spans lie at alanine 9–phenylalanine 29 and isoleucine 79–isoleucine 99.

The protein belongs to the MscL family. As to quaternary structure, homopentamer.

The protein resides in the cell inner membrane. Functionally, channel that opens in response to stretch forces in the membrane lipid bilayer. May participate in the regulation of osmotic pressure changes within the cell. This chain is Large-conductance mechanosensitive channel, found in Pseudomonas syringae pv. tomato (strain ATCC BAA-871 / DC3000).